Reading from the N-terminus, the 432-residue chain is Adenylosuccinate synthetase (432 aa).

Residues 13 to 19 and 41 to 43 each bind GTP; these read GDEGKGK and GHT. Asp14 serves as the catalytic Proton acceptor. Mg(2+)-binding residues include Asp14 and Gly41. Residues 14 to 17, 39 to 42, Thr130, Arg144, Gln225, Thr240, and Arg304 each bind IMP; these read DEGK and NAGH. Catalysis depends on His42, which acts as the Proton donor. Residue 300–306 participates in substrate binding; sequence AVTGRPR. Residues Arg306, 332-334, and 415-417 contribute to the GTP site; these read KLD and STG.

The protein belongs to the adenylosuccinate synthetase family. In terms of assembly, homodimer. The cofactor is Mg(2+).

Its subcellular location is the cytoplasm. The catalysed reaction is IMP + L-aspartate + GTP = N(6)-(1,2-dicarboxyethyl)-AMP + GDP + phosphate + 2 H(+). The protein operates within purine metabolism; AMP biosynthesis via de novo pathway; AMP from IMP: step 1/2. Its function is as follows. Plays an important role in the de novo pathway of purine nucleotide biosynthesis. Catalyzes the first committed step in the biosynthesis of AMP from IMP. This is Adenylosuccinate synthetase from Histophilus somni (strain 129Pt) (Haemophilus somnus).